An 880-amino-acid chain; its full sequence is DNA mismatch repair protein MutS (880 aa).

624–631 (GPNMAGKS) serves as a coordination point for ATP.

This sequence belongs to the DNA mismatch repair MutS family.

This protein is involved in the repair of mismatches in DNA. It is possible that it carries out the mismatch recognition step. This protein has a weak ATPase activity. This Alkaliphilus metalliredigens (strain QYMF) protein is DNA mismatch repair protein MutS.